The primary structure comprises 658 residues: UvrABC system protein B (658 aa).

One can recognise a Helicase ATP-binding domain in the interval 26 to 413; sequence EGINSGKKKQ…SPEVIEQIIR (388 aa). 39–46 is a binding site for ATP; sequence GATGTGKT. Residues 92 to 115 carry the Beta-hairpin motif; it reads YYDYYQPEAYVPQTDTFIEKDAQI. The region spanning 430–596 is the Helicase C-terminal domain; that stretch reads QIDDLLGEIQ…TIQKGVRDVI (167 aa). Residues 622-657 enclose the UVR domain; the sequence is EKTIAKMEAEMKEAAKALDFERAAELRDLLLELKAE.

This sequence belongs to the UvrB family. As to quaternary structure, forms a heterotetramer with UvrA during the search for lesions. Interacts with UvrC in an incision complex.

It localises to the cytoplasm. Its function is as follows. The UvrABC repair system catalyzes the recognition and processing of DNA lesions. A damage recognition complex composed of 2 UvrA and 2 UvrB subunits scans DNA for abnormalities. Upon binding of the UvrA(2)B(2) complex to a putative damaged site, the DNA wraps around one UvrB monomer. DNA wrap is dependent on ATP binding by UvrB and probably causes local melting of the DNA helix, facilitating insertion of UvrB beta-hairpin between the DNA strands. Then UvrB probes one DNA strand for the presence of a lesion. If a lesion is found the UvrA subunits dissociate and the UvrB-DNA preincision complex is formed. This complex is subsequently bound by UvrC and the second UvrB is released. If no lesion is found, the DNA wraps around the other UvrB subunit that will check the other stand for damage. This chain is UvrABC system protein B, found in Bacillus cereus (strain ATCC 10987 / NRS 248).